We begin with the raw amino-acid sequence, 382 residues long: Apolipoprotein A-IV (382 aa).

A signal peptide spans 1–20 (MFLKAVVLTLSLVAVTGAQA). Repeat copies occupy residues 33 to 54 (DYFS…KSEL), 60 to 81 (ALFQ…KKLV), 82 to 103 (PFAT…EEIR), 115 to 136 (PHAD…QRLG), 137 to 158 (PYAE…NQLT), 159 to 180 (AHAQ…ASLT), 181 to 202 (PYAD…GHLT), 203 to 224 (PYAD…RSLA), 225 to 246 (PYAQ…FQMK), 247 to 268 (KNAE…QKLV), 269 to 286 (PVAE…EELQ), 287 to 308 (KSLA…RNVG), and 309 to 330 (PYGE…QKLG). A 13 X 22 AA approximate tandem repeats region spans residues 33–330 (DYFSQLSNNA…QVEELRQKLG (298 aa)).

It belongs to the apolipoprotein A1/A4/E family. In terms of assembly, homodimer. Post-translationally, phosphorylation sites are present in the extracellular medium.

It is found in the secreted. Its function is as follows. May have a role in chylomicrons and VLDL secretion and catabolism. Required for efficient activation of lipoprotein lipase by ApoC-II; potent activator of LCAT. Apoa-IV is a major component of HDL and chylomicrons. The chain is Apolipoprotein A-IV (APOA4) from Neomonachus schauinslandi (Hawaiian monk seal).